A 384-amino-acid polypeptide reads, in one-letter code: Farnesyl pyrophosphate synthase 1, mitochondrial (384 aa).

Isopentenyl diphosphate is bound by residues Lys-89, Arg-92, and Gln-128. Asp-135 and Asp-139 together coordinate Mg(2+). Arg-144 is a binding site for dimethylallyl diphosphate. Arg-145 serves as a coordination point for isopentenyl diphosphate. Residues Lys-232, Thr-233, Gln-271, Lys-288, and Lys-297 each contribute to the dimethylallyl diphosphate site.

The protein belongs to the FPP/GGPP synthase family. Mg(2+) serves as cofactor. In terms of tissue distribution, the FPS1L mRNA accumulates preferentially in inflorescences, whereas the FPS1S mRNA is predominantly expressed in roots and inflorescences.

It is found in the mitochondrion. It localises to the cytoplasm. The catalysed reaction is isopentenyl diphosphate + dimethylallyl diphosphate = (2E)-geranyl diphosphate + diphosphate. The enzyme catalyses isopentenyl diphosphate + (2E)-geranyl diphosphate = (2E,6E)-farnesyl diphosphate + diphosphate. It functions in the pathway isoprenoid biosynthesis; farnesyl diphosphate biosynthesis; farnesyl diphosphate from geranyl diphosphate and isopentenyl diphosphate: step 1/1. The protein operates within isoprenoid biosynthesis; geranyl diphosphate biosynthesis; geranyl diphosphate from dimethylallyl diphosphate and isopentenyl diphosphate: step 1/1. Functionally, catalyzes the sequential condensation of isopentenyl pyrophosphate with the allylic pyrophosphates, dimethylallyl pyrophosphate, and then with the resultant geranylpyrophosphate to the ultimate product farnesyl pyrophosphate. The sequence is that of Farnesyl pyrophosphate synthase 1, mitochondrial (FPS1) from Arabidopsis thaliana (Mouse-ear cress).